The sequence spans 1171 residues: ATP-dependent helicase/deoxyribonuclease subunit B (1171 aa).

The UvrD-like helicase ATP-binding domain maps to Met1–Ala390. Position 8–15 (Gly8–Ser15) interacts with ATP. In terms of domain architecture, UvrD-like helicase C-terminal spans Met281–Asp587. [4Fe-4S] cluster is bound by residues Cys805, Cys1129, Cys1132, and Cys1138.

This sequence belongs to the helicase family. AddB/RexB type 1 subfamily. In terms of assembly, heterodimer of AddA and AddB. The cofactor is Mg(2+). [4Fe-4S] cluster serves as cofactor.

Its function is as follows. The heterodimer acts as both an ATP-dependent DNA helicase and an ATP-dependent, dual-direction single-stranded exonuclease. Recognizes the chi site generating a DNA molecule suitable for the initiation of homologous recombination. The AddB subunit has 5' -&gt; 3' nuclease activity but not helicase activity. This chain is ATP-dependent helicase/deoxyribonuclease subunit B, found in Bacillus cereus (strain ZK / E33L).